The following is a 78-amino-acid chain: Large ribosomal subunit protein bL28 (78 aa).

This sequence belongs to the bacterial ribosomal protein bL28 family.

This Prochlorococcus marinus (strain SARG / CCMP1375 / SS120) protein is Large ribosomal subunit protein bL28.